The chain runs to 188 residues: Peptidyl-tRNA hydrolase (188 aa).

Residue Tyr-14 participates in tRNA binding. His-19 (proton acceptor) is an active-site residue. 3 residues coordinate tRNA: Phe-64, Asn-66, and Asn-112.

It belongs to the PTH family. In terms of assembly, monomer.

Its subcellular location is the cytoplasm. It carries out the reaction an N-acyl-L-alpha-aminoacyl-tRNA + H2O = an N-acyl-L-amino acid + a tRNA + H(+). In terms of biological role, hydrolyzes ribosome-free peptidyl-tRNAs (with 1 or more amino acids incorporated), which drop off the ribosome during protein synthesis, or as a result of ribosome stalling. Catalyzes the release of premature peptidyl moieties from peptidyl-tRNA molecules trapped in stalled 50S ribosomal subunits, and thus maintains levels of free tRNAs and 50S ribosomes. The sequence is that of Peptidyl-tRNA hydrolase from Enterococcus faecalis (strain ATCC 700802 / V583).